The primary structure comprises 437 residues: Probable N-acetylmuramidase (437 aa).

A signal peptide spans 1–57 (MPVSRVKVKNRHLKKKTKKPLAFYKPATKFAGAVLIAGTLTTTHELLLQQTSPMVQA). Disordered regions lie at residues 217 to 244 (SSAGNTNSGGSTTTITNNNSGTNSSSTT), 290 to 320 (ASSTNSGGSNNSASTTPTTSVTPAKPTSQTT), and 367 to 392 (AASNPSTGSGSTATNNSNSTSSNSNA). One can recognise a LysM 1 domain in the interval 243-286 (TTYTVKSGDTLWGISQRYGISVAQIQSANNLKSTIIYIGQKLVL). Positions 290–317 (ASSTNSGGSNNSASTTPTTSVTPAKPTS) are enriched in low complexity. Residues 319-362 (TTVKVKSGDTLWALSVKYKTSIAQLKSWNHLSSDTIYIGQNLIV) form the LysM 2 domain. Residues 393 to 436 (SIHKVVKGDTLWGLSQKSGSPIASIKAWNHLSSDTILIGQYLRI) enclose the LysM 3 domain.

Belongs to the glycosyl hydrolase 73 family.

It is found in the secreted. The enzyme catalyses Hydrolysis of (1-&gt;4)-beta-linkages between N-acetylmuramic acid and N-acetyl-D-glucosamine residues in a peptidoglycan and between N-acetyl-D-glucosamine residues in chitodextrins.. Its function is as follows. Hydrolyzes the cell wall of L.lactis and M.lysodeikticus. Required for cell separation during growth. This Lactococcus lactis subsp. cremoris (strain MG1363) protein is Probable N-acetylmuramidase (acmA).